Here is a 244-residue protein sequence, read N- to C-terminus: 7-cyano-7-deazaguanine synthase (244 aa).

Position 14–24 (14–24 (FSGGQDSATCV)) interacts with ATP. 4 residues coordinate Zn(2+): cysteine 202, cysteine 217, cysteine 220, and cysteine 223.

The protein belongs to the QueC family. Zn(2+) serves as cofactor.

It catalyses the reaction 7-carboxy-7-deazaguanine + NH4(+) + ATP = 7-cyano-7-deazaguanine + ADP + phosphate + H2O + H(+). It participates in purine metabolism; 7-cyano-7-deazaguanine biosynthesis. Functionally, catalyzes the ATP-dependent conversion of 7-carboxy-7-deazaguanine (CDG) to 7-cyano-7-deazaguanine (preQ(0)). This chain is 7-cyano-7-deazaguanine synthase, found in Burkholderia multivorans (strain ATCC 17616 / 249).